We begin with the raw amino-acid sequence, 700 residues long: pH-response regulator protein palI/prr-5 (700 aa).

The Cytoplasmic segment spans residues M1–L8. A helical transmembrane segment spans residues A9 to I29. The Extracellular segment spans residues K30–S90. A helical transmembrane segment spans residues I91–V111. The Cytoplasmic portion of the chain corresponds to A112 to Y123. Residues L124–V144 form a helical membrane-spanning segment. At D145–H152 the chain is on the extracellular side. A helical transmembrane segment spans residues L153 to V173. Residues T174–R700 lie on the Cytoplasmic side of the membrane. Disordered stretches follow at residues S226–D491, V507–E560, and D573–R700. Residues K234–I252 are compositionally biased toward basic and acidic residues. The span at G320–R378 shows a compositional bias: gly residues. Over residues S414–G424 the composition is skewed to polar residues. Polar residues-rich tracts occupy residues S593 to Y603 and E615 to N637. Positions V657–A671 are enriched in low complexity.

It belongs to the palI/RIM9 family.

Its subcellular location is the cell membrane. In terms of biological role, required for the proteolytic cleavage of the transcription factor pacc-1 in response to alkaline ambient pH. This is pH-response regulator protein palI/prr-5 (prr-5) from Neurospora crassa (strain ATCC 24698 / 74-OR23-1A / CBS 708.71 / DSM 1257 / FGSC 987).